A 346-amino-acid chain; its full sequence is S-adenosylmethionine:tRNA ribosyltransferase-isomerase (346 aa).

This sequence belongs to the QueA family. In terms of assembly, monomer.

It is found in the cytoplasm. The enzyme catalyses 7-aminomethyl-7-carbaguanosine(34) in tRNA + S-adenosyl-L-methionine = epoxyqueuosine(34) in tRNA + adenine + L-methionine + 2 H(+). It participates in tRNA modification; tRNA-queuosine biosynthesis. Its function is as follows. Transfers and isomerizes the ribose moiety from AdoMet to the 7-aminomethyl group of 7-deazaguanine (preQ1-tRNA) to give epoxyqueuosine (oQ-tRNA). This is S-adenosylmethionine:tRNA ribosyltransferase-isomerase from Shewanella frigidimarina (strain NCIMB 400).